The sequence spans 112 residues: UPF0060 membrane protein IL2332 (112 aa).

A run of 4 helical transmembrane segments spans residues 10-30 (LGLF…PYLW), 36-56 (SAWL…LLTL), 64-84 (VYAA…KAVE), and 90-110 (TYDA…AVGW).

It belongs to the UPF0060 family.

It localises to the cell inner membrane. This Idiomarina loihiensis (strain ATCC BAA-735 / DSM 15497 / L2-TR) protein is UPF0060 membrane protein IL2332.